The primary structure comprises 394 residues: Elongation factor Tu 2 (394 aa).

Positions 10–204 (KPHVNVGTIG…FLDSYIPEPE (195 aa)) constitute a tr-type G domain. A G1 region spans residues 19 to 26 (GHVDHGKT). 19 to 26 (GHVDHGKT) lines the GTP pocket. Threonine 26 is a Mg(2+) binding site. Residues 60–64 (GITIN) form a G2 region. Residues 81–84 (DCPG) are G3. GTP-binding positions include 81-85 (DCPGH) and 136-139 (NKCD). The tract at residues 136-139 (NKCD) is G4. The G5 stretch occupies residues 174–176 (SAL).

Belongs to the TRAFAC class translation factor GTPase superfamily. Classic translation factor GTPase family. EF-Tu/EF-1A subfamily. In terms of assembly, monomer.

It is found in the cytoplasm. The catalysed reaction is GTP + H2O = GDP + phosphate + H(+). Functionally, GTP hydrolase that promotes the GTP-dependent binding of aminoacyl-tRNA to the A-site of ribosomes during protein biosynthesis. This Shigella flexneri serotype 5b (strain 8401) protein is Elongation factor Tu 2.